A 367-amino-acid polypeptide reads, in one-letter code: DNA replication and repair protein RecF (367 aa).

An ATP-binding site is contributed by 31–38 (GENGSGKT).

It belongs to the RecF family.

The protein resides in the cytoplasm. The RecF protein is involved in DNA metabolism; it is required for DNA replication and normal SOS inducibility. RecF binds preferentially to single-stranded, linear DNA. It also seems to bind ATP. This chain is DNA replication and repair protein RecF, found in Saccharophagus degradans (strain 2-40 / ATCC 43961 / DSM 17024).